Consider the following 607-residue polypeptide: MSQVFDASAFLATCSGRPGVYRMFDGEARLLYVGKAKNLKKRLASYFRKTGLAPKTAALVARIAQVETTITANETEALLLEQNLIKEWRPPYNILLRDDKSYPYVFLSDGEFPRLGIHRGAKKAKGRYFGPYPSAGAIRESLSLLQKAFSVRQCEDSYYANRTRPCLQYQIKRCKGPCTDLVTAEEYAEDVRHSVMFLEGRSQQLGNELNAEMEKAAMALDFEKAAELRDQIALLRRVQDQQYIEGGSGDVDVIAAFVNPGGACVHLISVRGGRVLGSKNFFPQVGIEEEVAEVMAAFLSQYYLGNAERELPGELIVNVVHEDFNAITEALHTLRGRELTISHRVRGTRARWQQLAVTNAEQALNARLANRQHMAARFEALAEVLGLDEVPQRLECYDISHSSGEATVASCVVFGPEGPIKSDYRRFNIEDVTAGDDYAAMHQALTRRYGRIKDGEGKLPDVLLVDGGKGQLNMARDVMQELGFTDLTLLGVAKGVTRKAGFETLYLNDVHHEFTLKGDSSALHLIQQIRDEAHRFAITGHRARRGKARRVSSLEDVAGVGPKRRRDLLKHFGGLQELNRASIDEIAKAPGISKKLAESIYASLHSE.

In terms of domain architecture, GIY-YIG spans 16–94 (GRPGVYRMFD…IKEWRPPYNI (79 aa)). The 36-residue stretch at 203–238 (QQLGNELNAEMEKAAMALDFEKAAELRDQIALLRRV) folds into the UVR domain.

It belongs to the UvrC family. Interacts with UvrB in an incision complex.

Its subcellular location is the cytoplasm. Its function is as follows. The UvrABC repair system catalyzes the recognition and processing of DNA lesions. UvrC both incises the 5' and 3' sides of the lesion. The N-terminal half is responsible for the 3' incision and the C-terminal half is responsible for the 5' incision. In Pseudomonas putida (strain ATCC 47054 / DSM 6125 / CFBP 8728 / NCIMB 11950 / KT2440), this protein is UvrABC system protein C.